The following is a 410-amino-acid chain: Neuroserpin (410 aa).

Residues 1–16 form the signal peptide; that stretch reads MTYLELLALLALQSVV. Residues Asn157, Asn321, and Asn401 are each glycosylated (N-linked (GlcNAc...) asparagine). Residue Ser403 is glycosylated (O-linked (Xyl...) (chondroitin sulfate) serine).

The protein belongs to the serpin family. In terms of tissue distribution, detected in neurons in embryonic brain cortex (at protein level). During embryonic development mostly expressed in CNS. In adult expressed in brain and much less in spinal cord, heart, kidney and testis.

Its subcellular location is the secreted. It is found in the cytoplasmic vesicle. The protein resides in the secretory vesicle lumen. It localises to the perikaryon. Serine protease inhibitor that inhibits plasminogen activators and plasmin but not thrombin. May be involved in the formation or reorganization of synaptic connections as well as for synaptic plasticity in the adult nervous system. May protect neurons from cell damage by tissue-type plasminogen activator. The polypeptide is Neuroserpin (Serpini1) (Mus musculus (Mouse)).